A 342-amino-acid polypeptide reads, in one-letter code: Anthranilate phosphoribosyltransferase (342 aa).

Residues glycine 90, 93 to 94 (GS), threonine 98, 100 to 103 (NIST), 118 to 126 (KHGNRRATS), and serine 130 contribute to the 5-phospho-alpha-D-ribose 1-diphosphate site. Position 90 (glycine 90) interacts with anthranilate. Serine 102 is a Mg(2+) binding site. Asparagine 121 is an anthranilate binding site. Position 176 (arginine 176) interacts with anthranilate. The Mg(2+) site is built by aspartate 235 and glutamate 236.

The protein belongs to the anthranilate phosphoribosyltransferase family. In terms of assembly, homodimer. It depends on Mg(2+) as a cofactor.

The enzyme catalyses N-(5-phospho-beta-D-ribosyl)anthranilate + diphosphate = 5-phospho-alpha-D-ribose 1-diphosphate + anthranilate. The protein operates within amino-acid biosynthesis; L-tryptophan biosynthesis; L-tryptophan from chorismate: step 2/5. In terms of biological role, catalyzes the transfer of the phosphoribosyl group of 5-phosphorylribose-1-pyrophosphate (PRPP) to anthranilate to yield N-(5'-phosphoribosyl)-anthranilate (PRA). The sequence is that of Anthranilate phosphoribosyltransferase from Rhodopirellula baltica (strain DSM 10527 / NCIMB 13988 / SH1).